The sequence spans 334 residues: Mediator of RNA polymerase II transcription subunit 4 (334 aa).

Positions 76 to 100 form a coiled coil; sequence LIRTLKAHVEKRDEVIQQVENNLKA. Residues 188-203 show a composition bias toward low complexity; the sequence is SSAQKPIIASPSASSS. 2 disordered regions span residues 188–234 and 252–334; these read SSAQ…GYGA and EKQW…GRNK. 2 stretches are compositionally biased toward polar residues: residues 204–225 and 264–282; these read NGGT…TNGD and ATSS…SSPS.

It belongs to the Mediator complex subunit 4 family. As to quaternary structure, component of the Mediator complex.

It localises to the nucleus. In terms of biological role, component of the Mediator complex, a coactivator involved in the regulated transcription of nearly all RNA polymerase II-dependent genes. Mediator functions as a bridge to convey information from gene-specific regulatory proteins to the basal RNA polymerase II transcription machinery. Mediator is recruited to promoters by direct interactions with regulatory proteins and serves as a scaffold for the assembly of a functional preinitiation complex with RNA polymerase II and the general transcription factors. The chain is Mediator of RNA polymerase II transcription subunit 4 (mdt-4) from Caenorhabditis briggsae.